The following is a 138-amino-acid chain: Small ribosomal subunit protein bS18m (138 aa).

It belongs to the bacterial ribosomal protein bS18 family. As to quaternary structure, component of the mitochondrial small ribosomal subunit. Mature mitochondrial ribosomes consist of a small (37S) and a large (54S) subunit. The 37S subunit contains at least 33 different proteins and 1 molecule of RNA (15S). The 54S subunit contains at least 45 different proteins and 1 molecule of RNA (21S).

It localises to the mitochondrion. The polypeptide is Small ribosomal subunit protein bS18m (RSM18) (Saccharomyces cerevisiae (strain RM11-1a) (Baker's yeast)).